Reading from the N-terminus, the 204-residue chain is Inactive ribonuclease-like protein 9 (204 aa).

The signal sequence occupies residues M1 to L26. 3 cysteine pairs are disulfide-bonded: C97–C152, C115–C167, and C122–C129. N130 and N142 each carry an N-linked (GlcNAc...) asparagine glycan.

It belongs to the pancreatic ribonuclease family.

The protein resides in the secreted. Its function is as follows. Does not exhibit any ribonuclease activity. The polypeptide is Inactive ribonuclease-like protein 9 (RNASE9) (Chlorocebus pygerythrus (Vervet monkey)).